Reading from the N-terminus, the 44-residue chain is Photosystem II reaction center protein J (44 aa).

The helical transmembrane segment at 12–32 (IPLWIVGFVVGSLALGLLGIL) threads the bilayer.

The protein belongs to the PsbJ family. As to quaternary structure, PSII is composed of 1 copy each of membrane proteins PsbA, PsbB, PsbC, PsbD, PsbE, PsbF, PsbH, PsbI, PsbJ, PsbK, PsbL, PsbM, PsbT, PsbY, PsbZ, Psb30/Ycf12, at least 3 peripheral proteins of the oxygen-evolving complex and a large number of cofactors. It forms dimeric complexes.

It localises to the plastid. The protein localises to the chloroplast thylakoid membrane. One of the components of the core complex of photosystem II (PSII). PSII is a light-driven water:plastoquinone oxidoreductase that uses light energy to abstract electrons from H(2)O, generating O(2) and a proton gradient subsequently used for ATP formation. It consists of a core antenna complex that captures photons, and an electron transfer chain that converts photonic excitation into a charge separation. In Bigelowiella natans (Pedinomonas minutissima), this protein is Photosystem II reaction center protein J.